The chain runs to 66 residues: Defensin-like peptide 2/4 (66 aa).

The first 22 residues, 1 to 22 (MRLAYLLLLLVAVLFQAGGGSA), serve as a signal peptide directing secretion. A propeptide spanning residues 23–24 (KP) is cleaved from the precursor. The residue at position 26 (methionine 26) is a D-methionine; in form DLP-2. 3 disulfide bridges follow: cysteine 33–cysteine 63, cysteine 40–cysteine 56, and cysteine 48–cysteine 64.

Stereoinversion of L-Met-26 (in DLP-4) to D-Met-26 (in DLP-2). As to expression, produced by the crural gland and detected in venom from the spur located on each male hind leg. Is also widely expressed in both male and female tissues, including brain, intestine, kidney, lung, spleen and testis.

The protein localises to the secreted. In terms of biological role, does not show antimicrobial, myotoxic, hemolytic and cell-promoting activities. The chain is Defensin-like peptide 2/4 from Ornithorhynchus anatinus (Duckbill platypus).